A 564-amino-acid chain; its full sequence is Bifunctional protein CrtB/UppS (564 aa).

Residue Asp-329 is part of the active site. Residue Asp-329 coordinates Mg(2+). Substrate is bound by residues 330–333 (GNRR), Trp-334, His-346, and 374–376 (STE). Asn-377 serves as the catalytic Proton acceptor. Substrate is bound by residues Trp-378, Arg-380, Arg-497, and 502-504 (RIS). A Mg(2+)-binding site is contributed by Glu-515.

This sequence in the N-terminal section; belongs to the phytoene/squalene synthase family. In the C-terminal section; belongs to the UPP synthase family. In terms of assembly, homodimer. The cofactor is Mg(2+).

The catalysed reaction is 2 (2E,6E,10E)-geranylgeranyl diphosphate = 15-cis-phytoene + 2 diphosphate. The protein operates within carotenoid biosynthesis; phytoene biosynthesis; all-trans-phytoene from geranylgeranyl diphosphate: step 1/1. Functionally, catalyzes the reaction from prephytoene diphosphate to phytoene. In terms of biological role, catalyzes the condensation of isopentenyl diphosphate (IPP) with allylic pyrophosphates generating different type of terpenoids. The polypeptide is Bifunctional protein CrtB/UppS (crtB/uppS3) (Streptomyces coelicolor (strain ATCC BAA-471 / A3(2) / M145)).